Reading from the N-terminus, the 158-residue chain is Transcription elongation factor GreA (158 aa).

Residues 4-75 adopt a coiled-coil conformation; it reads QKQYPMTQEG…QRVENMLRNA (72 aa).

It belongs to the GreA/GreB family.

Its function is as follows. Necessary for efficient RNA polymerase transcription elongation past template-encoded arresting sites. The arresting sites in DNA have the property of trapping a certain fraction of elongating RNA polymerases that pass through, resulting in locked ternary complexes. Cleavage of the nascent transcript by cleavage factors such as GreA or GreB allows the resumption of elongation from the new 3'terminus. GreA releases sequences of 2 to 3 nucleotides. The chain is Transcription elongation factor GreA from Staphylococcus saprophyticus subsp. saprophyticus (strain ATCC 15305 / DSM 20229 / NCIMB 8711 / NCTC 7292 / S-41).